The chain runs to 148 residues: Lysozyme C (148 aa).

The N-terminal stretch at 1–18 (MKALIILGLVLLSVTVQG) is a signal peptide. The C-type lysozyme domain occupies 19 to 148 (KIFERCELAR…VSQYVKGCGV (130 aa)). Disulfide bonds link C24-C146, C48-C134, C83-C99, and C95-C113. Catalysis depends on residues E53 and D71.

It belongs to the glycosyl hydrolase 22 family. As to quaternary structure, monomer.

The protein resides in the secreted. The enzyme catalyses Hydrolysis of (1-&gt;4)-beta-linkages between N-acetylmuramic acid and N-acetyl-D-glucosamine residues in a peptidoglycan and between N-acetyl-D-glucosamine residues in chitodextrins.. Lysozymes have primarily a bacteriolytic function; those in tissues and body fluids are associated with the monocyte-macrophage system and enhance the activity of immunoagents. The polypeptide is Lysozyme C (LYZ) (Nasalis larvatus (Proboscis monkey)).